Here is a 303-residue protein sequence, read N- to C-terminus: Phytochrome-associated serine/threonine-protein phosphatase 1 (303 aa).

Residues Asp-50, His-52, Asp-78, and Asn-110 each coordinate Zn(2+). Catalysis depends on His-111, which acts as the Proton donor. His-160 and His-234 together coordinate Zn(2+).

Belongs to the PPP phosphatase family. PP-6 (PP-V) subfamily. As to quaternary structure, interacts with PHYA and PHYB, mostly when they are phosphorylated and in Pfr forms. Interacts with TAP46. Interacts with PIN1 and PIN2. Interacts with ABI5. Interacts with PIF3 and PIF4. Protein phosphatase 6 (PP6) holoenzyme is a heterotrimeric complex formed by the catalytic subunit FYPP, a SAPS domain-containing subunit (SAL) and a protein phosphatase 2A regulatory subunit A (PP2AA). Zn(2+) serves as cofactor. As to expression, mostly expressed in flowers. Also detected to a lower extent in stems and leaves. Expressed in roots.

It is found in the cytoplasm. It catalyses the reaction O-phospho-L-seryl-[protein] + H2O = L-seryl-[protein] + phosphate. It carries out the reaction O-phospho-L-threonyl-[protein] + H2O = L-threonyl-[protein] + phosphate. Its function is as follows. Catalytic subunit of protein phosphatase 6 (PP6). Dephosphorylates phosphorylated phytochromes, with a preference toward Pfr forms. Plays a major role in the photoperiodic control of flowering time in long days by modulating phytochrome signals in flowering time control. Involved in the regulation of polar auxin transport in roots. Dephosphorylates directly the auxin efflux carriers PIN1 and PIN2, thus promoting their proper polar localization in root cell plasma membrane. Acts antagonistically with the protein kinase PID to regulate the reversible phosphorylation of PIN and polar targeting, subsequently impacting polar auxin transport and plant development. Involved in the regulation of abscisic acid (ABA) signaling during seed germination and postgermination seedling growth. Functions as a negative regulator of ABA signaling through direct dephosphorylation and destabilization of ABI5. Acts antagonistically with the protein kinase SRK2E/SNRK2.6 to regulate ABI5 phosphorylation and ABA responses. Involved in the regulation of phosphorylation status in hypocotyl phototropism. Involved in the negative regulation of photomorphogenesis by controlling the stability and transcriptional activity of PIF3 and PIF4 proteins in the dark, via the regulation of their phosphorylation status. This chain is Phytochrome-associated serine/threonine-protein phosphatase 1, found in Arabidopsis thaliana (Mouse-ear cress).